The chain runs to 402 residues: Nicotinate phosphoribosyltransferase (402 aa).

Phosphohistidine; by autocatalysis is present on His224.

This sequence belongs to the NAPRTase family. Post-translationally, transiently phosphorylated on a His residue during the reaction cycle. Phosphorylation strongly increases the affinity for substrates and increases the rate of nicotinate D-ribonucleotide production. Dephosphorylation regenerates the low-affinity form of the enzyme, leading to product release.

The enzyme catalyses nicotinate + 5-phospho-alpha-D-ribose 1-diphosphate + ATP + H2O = nicotinate beta-D-ribonucleotide + ADP + phosphate + diphosphate. It participates in cofactor biosynthesis; NAD(+) biosynthesis; nicotinate D-ribonucleotide from nicotinate: step 1/1. Functionally, catalyzes the synthesis of beta-nicotinate D-ribonucleotide from nicotinate and 5-phospho-D-ribose 1-phosphate at the expense of ATP. The polypeptide is Nicotinate phosphoribosyltransferase (Neisseria meningitidis serogroup C (strain 053442)).